The chain runs to 543 residues: T-complex protein 1 subunit gamma (543 aa).

This sequence belongs to the TCP-1 chaperonin family.

It is found in the cytoplasm. Molecular chaperone; assists the folding of proteins upon ATP hydrolysis. Known to play a role, in vitro, in the folding of actin and tubulin. Plays a role in microtubule polymerization. The protein is T-complex protein 1 subunit gamma of Caenorhabditis elegans.